The chain runs to 214 residues: Adenylate kinase (214 aa).

Position 10 to 15 (10 to 15 (GAGKGT)) interacts with ATP. Residues 30–59 (STGDMLRAAIKAGTELGKQAKAVIDAGQLV) are NMP. Residues threonine 31, arginine 36, 57–59 (QLV), 85–88 (GFPR), and glutamine 92 each bind AMP. The segment at 122 to 159 (GRRAHLPSGRTYHVVYNPPKVEGKDDVTGEDLVVRDDD) is LID. ATP-binding positions include arginine 123 and 132-133 (TY). The AMP site is built by arginine 156 and arginine 167. Residue lysine 200 participates in ATP binding.

This sequence belongs to the adenylate kinase family. In terms of assembly, monomer.

It is found in the cytoplasm. The enzyme catalyses AMP + ATP = 2 ADP. It participates in purine metabolism; AMP biosynthesis via salvage pathway; AMP from ADP: step 1/1. In terms of biological role, catalyzes the reversible transfer of the terminal phosphate group between ATP and AMP. Plays an important role in cellular energy homeostasis and in adenine nucleotide metabolism. The chain is Adenylate kinase from Vibrio campbellii (strain ATCC BAA-1116).